Reading from the N-terminus, the 153-residue chain is Aspartate carbamoyltransferase regulatory chain (153 aa).

Zn(2+)-binding residues include Cys-109, Cys-114, Cys-138, and Cys-141.

This sequence belongs to the PyrI family. Contains catalytic and regulatory chains. The cofactor is Zn(2+).

Its function is as follows. Involved in allosteric regulation of aspartate carbamoyltransferase. In Salmonella schwarzengrund (strain CVM19633), this protein is Aspartate carbamoyltransferase regulatory chain.